We begin with the raw amino-acid sequence, 446 residues long: MLKKIFIKTFGCQMNEYDSNRIFDTVKKIGFEKTEKYEDANCYLLNTCHIRDKAKEKVYHEIGRVKKIFREKKKPIVVVAGCVAQAENQEMLKREPYIDIVIGPQSYHKINEAILNHLKNKKKEEETEFDTISKFNYLSQIKNKDSKVSSFLTIQEGCDKFCHFCVVPYTRGPEYSRPFDQIINEAKELVQSGAKEIILLGQNVNAYSYDEEGKKYRLSDLLIKLDSFDKLERIRYTTSHPKDMTDDLINVYKTSSKLMPLVHLPVQSGSNKILNLMNRKHTIEEYLLVYEKLRKINPKIEFSSDFIIGYPEEDEQDFKMTMELIEKVKFINSYSFIFSPRPGTVAANLTLVDQKKSKQRLEIIQEKLFNNQIKKNKSLENKILNVLVENKMKDGIKLFGRTEYMTSVIFDGNIENIGKLVQVEIISSNQNSLFGKLTESSKKKVA.

Positions 3–119 constitute an MTTase N-terminal domain; the sequence is KKIFIKTFGC…INEAILNHLK (117 aa). Residues C12, C48, C82, C158, C162, and C165 each coordinate [4Fe-4S] cluster. The Radical SAM core domain occupies 144–374; that stretch reads KDSKVSSFLT…QEKLFNNQIK (231 aa). Residues 377 to 439 form the TRAM domain; sequence KSLENKILNV…QNSLFGKLTE (63 aa).

Belongs to the methylthiotransferase family. MiaB subfamily. In terms of assembly, monomer. Requires [4Fe-4S] cluster as cofactor.

Its subcellular location is the cytoplasm. It catalyses the reaction N(6)-dimethylallyladenosine(37) in tRNA + (sulfur carrier)-SH + AH2 + 2 S-adenosyl-L-methionine = 2-methylsulfanyl-N(6)-dimethylallyladenosine(37) in tRNA + (sulfur carrier)-H + 5'-deoxyadenosine + L-methionine + A + S-adenosyl-L-homocysteine + 2 H(+). In terms of biological role, catalyzes the methylthiolation of N6-(dimethylallyl)adenosine (i(6)A), leading to the formation of 2-methylthio-N6-(dimethylallyl)adenosine (ms(2)i(6)A) at position 37 in tRNAs that read codons beginning with uridine. This chain is tRNA-2-methylthio-N(6)-dimethylallyladenosine synthase, found in Pelagibacter ubique (strain HTCC1062).